The primary structure comprises 313 residues: Ornithine carbamoyltransferase (313 aa).

Carbamoyl phosphate contacts are provided by residues 57 to 60 (STRT), Q84, R108, and 135 to 138 (HPCQ). L-ornithine contacts are provided by residues N166, D230, and 234-235 (SM). Residues 270-271 (CL) and R298 contribute to the carbamoyl phosphate site.

It belongs to the aspartate/ornithine carbamoyltransferase superfamily. OTCase family. Homohexamer.

It localises to the cytoplasm. It carries out the reaction carbamoyl phosphate + L-ornithine = L-citrulline + phosphate + H(+). The protein operates within amino-acid biosynthesis; L-arginine biosynthesis; L-arginine from L-ornithine and carbamoyl phosphate: step 1/3. Reversibly catalyzes the transfer of the carbamoyl group from carbamoyl phosphate (CP) to the N(epsilon) atom of ornithine (ORN) to produce L-citrulline. This chain is Ornithine carbamoyltransferase, found in Gloeobacter violaceus (strain ATCC 29082 / PCC 7421).